Here is a 293-residue protein sequence, read N- to C-terminus: 4-hydroxybenzoate octaprenyltransferase (293 aa).

Transmembrane regions (helical) follow at residues 26–48 (PIGT…GGMP), 98–118 (TEAK…DLLL), 122–142 (TFLL…MKRF), 145–165 (LPQV…YGAV), 167–187 (ESLP…TVAY), 218–238 (IIAL…WISQ), 241–261 (WGYF…CWLT), and 272–292 (AFLN…VGIY).

It belongs to the UbiA prenyltransferase family. Mg(2+) serves as cofactor.

Its subcellular location is the cell inner membrane. It carries out the reaction all-trans-octaprenyl diphosphate + 4-hydroxybenzoate = 4-hydroxy-3-(all-trans-octaprenyl)benzoate + diphosphate. Its pathway is cofactor biosynthesis; ubiquinone biosynthesis. Catalyzes the prenylation of para-hydroxybenzoate (PHB) with an all-trans polyprenyl group. Mediates the second step in the final reaction sequence of ubiquinone-8 (UQ-8) biosynthesis, which is the condensation of the polyisoprenoid side chain with PHB, generating the first membrane-bound Q intermediate 3-octaprenyl-4-hydroxybenzoate. In Actinobacillus pleuropneumoniae serotype 3 (strain JL03), this protein is 4-hydroxybenzoate octaprenyltransferase.